The sequence spans 282 residues: MLDDRSAIEHHKYSQRLTELERRSAAAQQRQQKKKPPKMHVGNKIRGIKIKRYVSNGERVLKLVVLFSAILLFMLYIISPLSKITTLHVTGNHDLTKEQVEKNANIYPGRFIWGVYLARHQLTKQAIRKNPQIKDLRIKVTGPQSLQISVKENALLGIAVMNNDTYAVLADGQLQRTKNADNGIAYKRFDGHKKVLATTAAQLGKLKLAIRNGISSVSYQPTKEYPDRVIIYMRDGNTVYGDLNTIGDKMGYYPAIAASMKNKGIIDLQVGAYSYDYGSKDK.

Residues 1-59 (MLDDRSAIEHHKYSQRLTELERRSAAAQQRQQKKKPPKMHVGNKIRGIKIKRYVSNGER) lie on the Cytoplasmic side of the membrane. The segment at 19–41 (ELERRSAAAQQRQQKKKPPKMHV) is disordered. Basic residues predominate over residues 31–41 (QQKKKPPKMHV). Residues 60 to 80 (VLKLVVLFSAILLFMLYIISP) form a helical membrane-spanning segment. At 81–282 (LSKITTLHVT…YSYDYGSKDK (202 aa)) the chain is on the extracellular side. Positions 82 to 153 (SKITTLHVTG…QSLQISVKEN (72 aa)) constitute a POTRA domain.

It belongs to the FtsQ/DivIB family. DivIB subfamily.

Its subcellular location is the cell membrane. In terms of biological role, cell division protein that may be involved in stabilizing or promoting the assembly of the division complex. This Limosilactobacillus reuteri (strain ATCC 55730 / SD2112) (Lactobacillus reuteri) protein is Cell division protein DivIB.